The sequence spans 329 residues: D-alanine--D-alanine ligase (329 aa).

One can recognise an ATP-grasp domain in the interval 120-326 (KLWLSAIGIP…FADYLEQILR (207 aa)). Residue 150–205 (ALAKWGKVFIKAASQGSSVGCYSASNEADLVKGIADAFGYSEQVLIEKAVKPRELE) participates in ATP binding. Residues Asp-280, Glu-293, and Asn-295 each contribute to the Mg(2+) site.

It belongs to the D-alanine--D-alanine ligase family. It depends on Mg(2+) as a cofactor. Mn(2+) serves as cofactor.

It is found in the cytoplasm. It catalyses the reaction 2 D-alanine + ATP = D-alanyl-D-alanine + ADP + phosphate + H(+). Its pathway is cell wall biogenesis; peptidoglycan biosynthesis. Cell wall formation. In Aeromonas hydrophila subsp. hydrophila (strain ATCC 7966 / DSM 30187 / BCRC 13018 / CCUG 14551 / JCM 1027 / KCTC 2358 / NCIMB 9240 / NCTC 8049), this protein is D-alanine--D-alanine ligase.